The primary structure comprises 502 residues: Protein adenylyltransferase Fic (502 aa).

Residues 1-24 are disordered; sequence MAMATGKATEEEQPEQGQQQQQLQ. Residues 15–24 show a composition bias toward low complexity; that stretch reads EQGQQQQQLQ. The helical transmembrane segment at 38 to 60 threads the bilayer; that stretch reads FALFFIAGCLAAFGFHALTSSSG. TPR repeat units lie at residues 122-155 and 156-190; these read AMGALRLAQEMYMTGKDDKAARLFEHALALAPKH and PEVLLRYGEFLEHNQRNIVLADQYYFQALSINPSN. The Inhibitory (S/T)XXXE(G/N) motif motif lies at 247–252; the sequence is SVGIEG. Residues E251 and 332–335 each bind ATP; that span reads VGGH. The Fido domain occupies 301 to 436; sequence ITLKDILELH…IRPFVRFIAD (136 aa). The active site involves H379. ATP contacts are provided by residues 383–390, 415–416, and N423; these read DGNGRTSR and YY. Residues 478–502 form a disordered region; sequence SPELYESGSGSGAGAGAGSGQKGMP. Gly residues predominate over residues 486–502; that stretch reads SGSGAGAGAGSGQKGMP.

The protein belongs to the fic family. In terms of assembly, homodimer.

It localises to the membrane. It carries out the reaction L-tyrosyl-[protein] + ATP = O-(5'-adenylyl)-L-tyrosyl-[protein] + diphosphate. The enzyme catalyses L-threonyl-[protein] + ATP = 3-O-(5'-adenylyl)-L-threonyl-[protein] + diphosphate. The catalysed reaction is 3-O-(5'-adenylyl)-L-threonyl-[protein] + H2O = L-threonyl-[protein] + AMP + H(+). With respect to regulation, the side chain of Glu-251 determines which of the two opposing activities (AMPylase or de-AMPylase) will take place. In response to endoplasmic reticulum stress, mediates de-AMPylase activity. Adenylyltransferase activity is inhibited by the inhibitory helix present at the N-terminus: Glu-251 binds ATP and competes with ATP-binding at Arg-390, thereby preventing adenylyltransferase activity. In unstressed cells, disengagement of Glu-251 promotes adenylyltransferase activity. Activation dissociates ATP-binding from Glu-251, allowing ordered binding of the entire ATP moiety with the alpha-phosphate in an orientation that is productive for accepting an incoming target hydroxyl side chain. Protein that can both mediate the addition of adenosine 5'-monophosphate (AMP) to specific residues of target proteins (AMPylation), and the removal of the same modification from target proteins (de-AMPylation), depending on the context. The side chain of Glu-251 determines which of the two opposing activities (AMPylase or de-AMPylase) will take place. Acts as a key regulator of the unfolded protein response (UPR) by mediating AMPylation or de-AMPylation of Hsc70-3/BiP. In unstressed cells, acts as an adenylyltransferase by mediating AMPylation of Hsc70-3/BiP at 'Thr-518', thereby inactivating it. In response to endoplasmic reticulum stress, acts as a phosphodiesterase by mediating removal of ATP (de-AMPylation) from Hsc70-3/BiP at 'Thr-518', leading to restore HSPA5/BiP activity. The protein is Protein adenylyltransferase Fic of Drosophila mojavensis (Fruit fly).